We begin with the raw amino-acid sequence, 611 residues long: Protein spaetzle 3 (611 aa).

Residues 1–14 (MALTNFSLPFGALG) form the signal peptide. N5 carries an N-linked (GlcNAc...) asparagine glycan. The interval 57-322 (EYFKNNPYAP…NDKSNNNQMP (266 aa)) is disordered. Composition is skewed to low complexity over residues 104 to 120 (QQVQ…QHQQ), 127 to 153 (SVSF…LTQT), and 169 to 185 (PGQQ…QQKQ). Residues 191–210 (GSASATFTKNSGSFSITSFG) show a composition bias toward polar residues. The span at 218–239 (PPQPQQPPPSQQQQPPPAPPPQ) shows a compositional bias: pro residues. Acidic residues predominate over residues 288 to 306 (YDVEEGEEDEEEDGEEEGQ). N335 and N351 each carry an N-linked (GlcNAc...) asparagine glycan. A disordered region spans residues 477-518 (KKRQAAAGGSRNRGGSAGGSGNGNTNANRQPGNKNGSSGTGR). Residues 487 to 498 (RNRGGSAGGSGN) are compositionally biased toward gly residues. The N-linked (GlcNAc...) asparagine glycan is linked to N511. The Spaetzle domain occupies 521-609 (ACESKIEIVT…LFPSCCVCRC (89 aa)). Intrachain disulfides connect C522–C573, C559–C605, and C567–C607.

In terms of assembly, homodimer; disulfide-linked.

Its function is as follows. Neurotrophin which may function as a ligand to the Toll-related receptor Tollo. Involved in a Tollo and JNK signaling pathway that positively regulates neuromuscular junction (NMJ) growth in presynaptic motorneurons. May function by activating Tollo to promote the phosphorylation of JNK. The protein is Protein spaetzle 3 of Drosophila melanogaster (Fruit fly).